A 325-amino-acid polypeptide reads, in one-letter code: Hydroxymethylglutaryl-CoA lyase, mitochondrial (325 aa).

A mitochondrion-targeting transit peptide spans 1-27; the sequence is MATVKKVLPRRLVGLATLRAVSTSSVG. Residues 33 to 300 enclose the Pyruvate carboxyltransferase domain; that stretch reads VKIVEVGPRD…HTGVNLQKLL (268 aa). R41 lines the substrate pocket. Residue D42 coordinates a divalent metal cation. An N6-acetyllysine; alternate modification is found at K48. K48 bears the N6-succinyllysine; alternate mark. K111 carries the N6-acetyllysine modification. Residues K137 and K179 each carry the N6-acetyllysine; alternate modification. N6-succinyllysine; alternate occurs at positions 137 and 179. The a divalent metal cation site is built by H233 and H235. C266 is an active-site residue. N275 lines the a divalent metal cation pocket. Residues 323 to 325 carry the Microbody targeting signal motif; that stretch reads CKL. K324 is modified (N6-acetyllysine).

This sequence belongs to the HMG-CoA lyase family. Homodimer; disulfide-linked. Can also form homotetramers.

Its subcellular location is the mitochondrion matrix. It localises to the peroxisome. The enzyme catalyses (3S)-3-hydroxy-3-methylglutaryl-CoA = acetoacetate + acetyl-CoA. The protein operates within metabolic intermediate metabolism; (S)-3-hydroxy-3-methylglutaryl-CoA degradation; acetoacetate from (S)-3-hydroxy-3-methylglutaryl-CoA: step 1/1. Its function is as follows. Mitochondrial 3-hydroxy-3-methylglutaryl-CoA lyase that catalyzes a cation-dependent cleavage of (S)-3-hydroxy-3-methylglutaryl-CoA into acetyl-CoA and acetoacetate, a key step in ketogenesis. Terminal step in leucine catabolism. Ketone bodies (beta-hydroxybutyrate, acetoacetate and acetone) are essential as an alternative source of energy to glucose, as lipid precursors and as regulators of metabolism. The protein is Hydroxymethylglutaryl-CoA lyase, mitochondrial (HMGCL) of Bos taurus (Bovine).